Here is a 273-residue protein sequence, read N- to C-terminus: 1,4-dihydroxy-2-naphthoyl-CoA synthase (273 aa).

Substrate contacts are provided by residues Arg-34, 73–77, Tyr-85, 117–121, Thr-143, Ser-149, Tyr-246, and Lys-261; these read SGGDQ and YAVGG. A hydrogencarbonate-binding site is contributed by 142 to 144; that stretch reads QTG. Positions 254–265 are enriched in basic and acidic residues; sequence GRDAFKEKRDPD. The disordered stretch occupies residues 254 to 273; the sequence is GRDAFKEKRDPDFDQFPKFP.

Belongs to the enoyl-CoA hydratase/isomerase family. MenB subfamily. The cofactor is hydrogencarbonate.

It catalyses the reaction 2-succinylbenzoyl-CoA + H(+) = 1,4-dihydroxy-2-naphthoyl-CoA + H2O. It functions in the pathway quinol/quinone metabolism; 1,4-dihydroxy-2-naphthoate biosynthesis; 1,4-dihydroxy-2-naphthoate from chorismate: step 6/7. It participates in quinol/quinone metabolism; menaquinone biosynthesis. Functionally, converts o-succinylbenzoyl-CoA (OSB-CoA) to 1,4-dihydroxy-2-naphthoyl-CoA (DHNA-CoA). The polypeptide is 1,4-dihydroxy-2-naphthoyl-CoA synthase (Staphylococcus aureus (strain MSSA476)).